Consider the following 584-residue polypeptide: NADPH-dependent diflavin oxidoreductase 1 (584 aa).

One can recognise a Flavodoxin-like domain in the interval 6 to 150 (IYILYGSETG…VFAYWCNHLY (145 aa)). FMN contacts are provided by residues 12–17 (SETGTA), 59–62 (STTG), 97–106 (CGDTSYTRFN), and E132. An FAD-binding FR-type domain is found at 199-436 (RGKIEATLVH…LPGFLNLSYQ (238 aa)). Residues R343, 373–376 (RQYS), and 407–410 (GICS) contribute to the FAD site. NADP(+) contacts are provided by residues T448, 503–504 (SR), and 509–513 (KKYVQ). W584 lines the FAD pocket.

Belongs to the NADPH-dependent diflavin oxidoreductase NDOR1 family. The protein in the N-terminal section; belongs to the flavodoxin family. It in the C-terminal section; belongs to the flavoprotein pyridine nucleotide cytochrome reductase family. In terms of assembly, interacts with dre2; as part of the cytosolic iron-sulfur (Fe-S) protein assembly (CIA) machinery. FAD is required as a cofactor. It depends on FMN as a cofactor.

The protein localises to the cytoplasm. The protein resides in the mitochondrion. It carries out the reaction 2 oxidized [2Fe-2S]-[protein] + NADPH = 2 reduced [2Fe-2S]-[protein] + NADP(+) + H(+). In terms of biological role, NADPH-dependent reductase which is a central component of the cytosolic iron-sulfur (Fe-S) protein assembly (CIA) machinery. Transfers electrons from NADPH via its FAD and FMN prosthetic groups to the [2Fe-2S] cluster of dre2, another key component of the CIA machinery. In turn, this reduced cluster provides electrons for assembly of cytosolic iron-sulfur cluster proteins. Positively controls H(2)O(2)-induced cell death. The sequence is that of NADPH-dependent diflavin oxidoreductase 1 from Schizosaccharomyces pombe (strain 972 / ATCC 24843) (Fission yeast).